The following is an 891-amino-acid chain: Protein translocase subunit SecA 1 (891 aa).

Residues Gln-86, 104 to 108 (GEGKT), and Asp-493 contribute to the ATP site. The segment covering 845–873 (KQVAKPIEASHGDGNRKKAPVVKEKEAGR) has biased composition (basic and acidic residues). Residues 845–891 (KQVAKPIEASHGDGNRKKAPVVKEKEAGRNDPCPCGSGKKYKKCCGE) form a disordered region. Cys-877, Cys-879, Cys-888, and Cys-889 together coordinate Zn(2+).

Belongs to the SecA family. Monomer and homodimer. Part of the essential Sec protein translocation apparatus which comprises SecA, SecYEG and auxiliary proteins SecDF. Other proteins may also be involved. Zn(2+) is required as a cofactor.

It localises to the cell membrane. The protein resides in the cytoplasm. It carries out the reaction ATP + H2O + cellular proteinSide 1 = ADP + phosphate + cellular proteinSide 2.. In terms of biological role, part of the Sec protein translocase complex. Interacts with the SecYEG preprotein conducting channel. Has a central role in coupling the hydrolysis of ATP to the transfer of proteins into and across the cell membrane, serving as an ATP-driven molecular motor driving the stepwise translocation of polypeptide chains across the membrane. The sequence is that of Protein translocase subunit SecA 1 from Alkaliphilus metalliredigens (strain QYMF).